The chain runs to 221 residues: Penicillin-binding protein activator LpoB (221 aa).

The signal sequence occupies residues 1–20; sequence MLNRMYRYALLATVALALSG. Residue C21 is the site of N-palmitoyl cysteine attachment. C21 carries the S-diacylglycerol cysteine lipid modification. Residues 29–82 are disordered; it reads PAPVEEAQPGTQQPTQPVPPPTQPVPTVPSVPSIPAQPGPIEHQPENATPEPKA. Positions 44–57 are enriched in pro residues; sequence QPVPPPTQPVPTVP.

This sequence belongs to the LpoB family. In terms of assembly, interacts with PBP1b.

The protein resides in the cell outer membrane. Functionally, regulator of peptidoglycan synthesis that is essential for the function of penicillin-binding protein 1B (PBP1b). In Cronobacter turicensis (strain DSM 18703 / CCUG 55852 / LMG 23827 / z3032), this protein is Penicillin-binding protein activator LpoB.